The chain runs to 284 residues: Tryptophan synthase alpha chain (284 aa).

Residues Glu55 and Asp66 each act as proton acceptor in the active site.

Belongs to the TrpA family. In terms of assembly, tetramer of two alpha and two beta chains.

The enzyme catalyses (1S,2R)-1-C-(indol-3-yl)glycerol 3-phosphate + L-serine = D-glyceraldehyde 3-phosphate + L-tryptophan + H2O. It functions in the pathway amino-acid biosynthesis; L-tryptophan biosynthesis; L-tryptophan from chorismate: step 5/5. In terms of biological role, the alpha subunit is responsible for the aldol cleavage of indoleglycerol phosphate to indole and glyceraldehyde 3-phosphate. The protein is Tryptophan synthase alpha chain of Methanococcus voltae.